Reading from the N-terminus, the 293-residue chain is Ribosomal protein L11 methyltransferase (293 aa).

The S-adenosyl-L-methionine site is built by Thr-145, Gly-166, Asp-188, and Asn-230.

This sequence belongs to the methyltransferase superfamily. PrmA family.

The protein localises to the cytoplasm. It carries out the reaction L-lysyl-[protein] + 3 S-adenosyl-L-methionine = N(6),N(6),N(6)-trimethyl-L-lysyl-[protein] + 3 S-adenosyl-L-homocysteine + 3 H(+). Methylates ribosomal protein L11. The sequence is that of Ribosomal protein L11 methyltransferase from Actinobacillus pleuropneumoniae serotype 3 (strain JL03).